A 596-amino-acid chain; its full sequence is Germinal center kinase 3 (596 aa).

Positions 1–54 are enriched in low complexity; sequence MSSSNLAGNTNTTTTSSAASAAAAHSAANASTITSEYSTTQTTTGTFNTDTLSS. The segment at 1-80 is disordered; it reads MSSSNLAGNT…PPPPPQVSSP (80 aa). Phosphothreonine; by autocatalysis is present on residues threonine 13 and threonine 32. Positions 67-77 are enriched in pro residues; that stretch reads SQPPPPPPPQV. Residues 108–386 enclose the Protein kinase domain; that stretch reads YKLDESIGVG…ASELLKYSFF (279 aa). ATP-binding positions include 114–122 and lysine 137; that span reads IGVGATATV. The residue at position 190 (serine 190) is a Phosphoserine; by autocatalysis. The active-site Proton acceptor is aspartate 240. At threonine 280 the chain carries Phosphothreonine. Serine 405 bears the Phosphoserine; by autocatalysis mark. Serine 419 carries the phosphoserine modification. Residues 429–496 form a disordered region; the sequence is NWEFEYDSPQ…EGGGATTPCP (68 aa). Residues 432–450 are compositionally biased toward acidic residues; the sequence is FEYDSPQESDDDSDLEDEE. Gly residues predominate over residues 466–479; it reads GAAGAAGGATGGAA.

It belongs to the protein kinase superfamily. STE Ser/Thr protein kinase family. STE20 subfamily. As to quaternary structure, interacts (via C-terminus) with clh-3; required for the phosphorylation-mediated inhibition of clh-3 function. Interacts (via C-terminus) with wnk-1; the interaction is direct. Phosphorylated at Thr-280 and Ser-419 probably by wnk-1; phosphorylation results in weak activation. Predominantly autophosphorylated at Thr-32 and Ser-190 and weakly autophosphorylated at Thr-13 and Ser-405 in vitro. As to expression, ubiquitously expressed with a higher expression in the excretory cell. Expressed in both male and female germ cells; up-regulated in maturing spermatocytes but absent in mature sperm.

The protein resides in the cytoplasm. Its subcellular location is the nucleus. It carries out the reaction L-seryl-[protein] + ATP = O-phospho-L-seryl-[protein] + ADP + H(+). The catalysed reaction is L-threonyl-[protein] + ATP = O-phospho-L-threonyl-[protein] + ADP + H(+). Plays a role in osmotic stress responses by regulating ion homeostasis and by controlling cell volume via the phosphorylation-mediated inhibition of the chloride channel clh-3. In addition, increases gpdh-1 translation upon osmotic stress, likely downstream of wnk-1. Involved in several developmental processes including the tubular formation of the excretory canals, the formation of the intestine and the progression through larval stages. In addition, required for germ line development by controlling meiosis and chromosomal segregation during spermatogenesis. By controlling clh-3 activity, may regulate the development of the excretory canals and fertility. This is Germinal center kinase 3 from Caenorhabditis elegans.